Consider the following 124-residue polypeptide: MSDIESIVEKLSSLTLIQAAELSKRLEEEWGVSASAPVAAVAPAVXXDVAVAEKTEFEVFLESFDAKSKISVIKEVRSITDLGLKEAKELVEALLKSLRTGVSKDEANELKKKLEAAGATISLR.

It belongs to the bacterial ribosomal protein bL12 family. Homodimer. Part of the ribosomal stalk of the 50S ribosomal subunit. Forms a multimeric L10(L12)X complex, where L10 forms an elongated spine to which 2 to 4 L12 dimers bind in a sequential fashion. Binds GTP-bound translation factors.

Forms part of the ribosomal stalk which helps the ribosome interact with GTP-bound translation factors. Is thus essential for accurate translation. This Liberibacter africanus subsp. capensis protein is Large ribosomal subunit protein bL12.